The following is a 259-amino-acid chain: Probable 6-phosphogluconolactonase 2 (259 aa).

The protein belongs to the glucosamine/galactosamine-6-phosphate isomerase family. 6-phosphogluconolactonase subfamily.

It is found in the cytoplasm. Its subcellular location is the cytosol. The enzyme catalyses 6-phospho-D-glucono-1,5-lactone + H2O = 6-phospho-D-gluconate + H(+). Its pathway is carbohydrate degradation; pentose phosphate pathway; D-ribulose 5-phosphate from D-glucose 6-phosphate (oxidative stage): step 2/3. Catalyzes the hydrolysis of 6-phosphogluconolactone to 6-phosphogluconate. This is Probable 6-phosphogluconolactonase 2 from Arabidopsis thaliana (Mouse-ear cress).